The following is a 124-amino-acid chain: MRIYETMFIIKPDVSEEERNKLVENVKKFLEERVKAQVETVDRWGIRKLAYKIGKYFEGDYTVMYFRSNGQGLDQLENYFKVHPEFMRWQTFRREDLEKKERRAARQKTGETQENVSQEESSTN.

The interval 100–124 (KERRAARQKTGETQENVSQEESSTN) is disordered. Residues 110–124 (GETQENVSQEESSTN) are compositionally biased toward polar residues.

The protein belongs to the bacterial ribosomal protein bS6 family.

Functionally, binds together with bS18 to 16S ribosomal RNA. The polypeptide is Small ribosomal subunit protein bS6 (Fervidobacterium nodosum (strain ATCC 35602 / DSM 5306 / Rt17-B1)).